A 598-amino-acid chain; its full sequence is Aspartate--tRNA(Asp/Asn) ligase (598 aa).

Glu-170 contributes to the L-aspartate binding site. Residues 194–197 (QLFK) form an aspartate region. Position 216 (Arg-216) interacts with L-aspartate. ATP-binding positions include 216–218 (RDE) and Gln-225. Residue His-448 coordinates L-aspartate. Glu-482 is a binding site for ATP. Arg-489 is an L-aspartate binding site. 534 to 537 (GWDR) is a binding site for ATP. The interval 558–598 (GGGVDPLTDAPAPITPQQRKESGIDAKPREDKPKEDAKSKA) is disordered. The segment covering 575–598 (QRKESGIDAKPREDKPKEDAKSKA) has biased composition (basic and acidic residues).

It belongs to the class-II aminoacyl-tRNA synthetase family. Type 1 subfamily. Homodimer.

The protein localises to the cytoplasm. It catalyses the reaction tRNA(Asx) + L-aspartate + ATP = L-aspartyl-tRNA(Asx) + AMP + diphosphate. Its function is as follows. Aspartyl-tRNA synthetase with relaxed tRNA specificity since it is able to aspartylate not only its cognate tRNA(Asp) but also tRNA(Asn). Reaction proceeds in two steps: L-aspartate is first activated by ATP to form Asp-AMP and then transferred to the acceptor end of tRNA(Asp/Asn). In Mycolicibacterium smegmatis (strain ATCC 700084 / mc(2)155) (Mycobacterium smegmatis), this protein is Aspartate--tRNA(Asp/Asn) ligase.